Reading from the N-terminus, the 360-residue chain is Cuticle collagen dpy-2 (360 aa).

3 triple-helical region regions span residues 123–152, 174–230, and 238–303; these read GERG…PGTT, GPRG…KGRT, and GPPG…PGTC. Disordered regions lie at residues 127–158 and 174–360; these read PSGD…ASCI and GPRG…IRKW. Positions 189 to 198 are enriched in gly residues; it reads GEYGIGGRPG. The span at 242 to 258 shows a compositional bias: low complexity; the sequence is DSGLPGPWGPPGSAGMP. Residues 273–288 are compositionally biased toward pro residues; sequence PGPPGAPGPGGMPGPN.

This sequence belongs to the cuticular collagen family. Collagen polypeptide chains are complexed within the cuticle by disulfide bonds and other types of covalent cross-links.

In terms of biological role, nematode cuticles are composed largely of collagen-like proteins. The cuticle functions both as an exoskeleton and as a barrier to protect the worm from its environment. Mutations in dpy-2 affects the body shape. In Caenorhabditis elegans, this protein is Cuticle collagen dpy-2 (dpy-2).